The sequence spans 256 residues: Imidazole glycerol phosphate synthase subunit HisF (256 aa).

Catalysis depends on residues aspartate 12 and aspartate 131.

The protein belongs to the HisA/HisF family. In terms of assembly, heterodimer of HisH and HisF.

It is found in the cytoplasm. It catalyses the reaction 5-[(5-phospho-1-deoxy-D-ribulos-1-ylimino)methylamino]-1-(5-phospho-beta-D-ribosyl)imidazole-4-carboxamide + L-glutamine = D-erythro-1-(imidazol-4-yl)glycerol 3-phosphate + 5-amino-1-(5-phospho-beta-D-ribosyl)imidazole-4-carboxamide + L-glutamate + H(+). It functions in the pathway amino-acid biosynthesis; L-histidine biosynthesis; L-histidine from 5-phospho-alpha-D-ribose 1-diphosphate: step 5/9. Functionally, IGPS catalyzes the conversion of PRFAR and glutamine to IGP, AICAR and glutamate. The HisF subunit catalyzes the cyclization activity that produces IGP and AICAR from PRFAR using the ammonia provided by the HisH subunit. The sequence is that of Imidazole glycerol phosphate synthase subunit HisF from Stutzerimonas stutzeri (strain A1501) (Pseudomonas stutzeri).